The sequence spans 1477 residues: Oligomycin resistance ATP-dependent permease YOR1 (1477 aa).

The disordered stretch occupies residues 1–48 (MTITVGDAVSETELENKSQNVVLSPKASASSDISTDVDKDTSSSWDDK). Residues 1 to 206 (MTITVGDAVS…RALLFTFKKQ (206 aa)) lie on the Cytoplasmic side of the membrane. A phosphoserine mark is found at S10 and S24. Residues 36–48 (DVDKDTSSSWDDK) show a composition bias toward basic and acidic residues. Position 53 is a phosphothreonine (T53). The Diacidic ER export motif DxE signature appears at 71-73 (DIE). A helical membrane pass occupies residues 207–227 (YFMSIVFAILANCTSGFNPMI). The ABC transmembrane type-1 1 domain maps to 207-493 (YFMSIVFAIL…LPIAIGTGID (287 aa)). Topologically, residues 228–249 (TKRLIEFVEEKAIFHSMHVNKG) are extracellular. The chain crosses the membrane as a helical span at residues 250–270 (IGYAIGACLMMFVNGLTFNHF). The Cytoplasmic segment spans residues 271–328 (FHTSQLTGVQAKSILTKAAMKKMFNASNYARHCFPNGKVTSFVTTDLARIEFALSFQP). The helical transmembrane segment at 329 to 349 (FLAGFPAILAICIVLLIVNLG) threads the bilayer. Residues 350–357 (PIALVGIG) lie on the Extracellular side of the membrane. A helical membrane pass occupies residues 358-370 (IFFGGFFISLFAF). Topologically, residues 371-433 (KLILGFRIAA…KVRKMQLSRN (63 aa)) are cytoplasmic. The chain crosses the membrane as a helical span at residues 434–454 (FLIAMAMSLPSIASLVTFLAM). Residues 455–478 (YKVNKGGRQPGNIFASLSLFQVLS) lie on the Extracellular side of the membrane. A helical membrane pass occupies residues 479-499 (LQMFFLPIAIGTGIDMIIGLG). Topologically, residues 500 to 615 (RLQSLLEAPE…DLNFDIKKGE (116 aa)) are cytoplasmic. The segment at 552-595 (KGEAKDEGKKNKKKRKDTWGKPSASTNKAKRLDNMLKDRDGPED) is disordered. Over residues 581–595 (KRLDNMLKDRDGPED) the composition is skewed to basic and acidic residues. Positions 581–808 (KRLDNMLKDR…NQTLINLLQF (228 aa)) constitute an ABC transporter 1 domain. The helical transmembrane segment at 616–636 (FIMITGPIGTGKSSLLNAMAG) threads the bilayer. An ATP-binding site is contributed by 621 to 628 (GPIGTGKS). Residues 637 to 892 (SMRKTDGKVE…EYIKAAVGKW (256 aa)) are Extracellular-facing. 3 N-linked (GlcNAc...) asparagine glycosylation sites follow: N661, N759, and N799. A helical transmembrane segment spans residues 893–913 (GFIALPLYAILVVGTTFCSLF). Residues 897 to 1175 (LPLYAILVVG…ILRAMTQTEN (279 aa)) enclose the ABC transmembrane type-1 2 domain. The Cytoplasmic portion of the chain corresponds to 914–940 (SSVWLSYWTENKFKNRPPSFYMGLYSF). The helical transmembrane segment at 941 to 961 (FVFAAFIFMNGQFTILCAMGI) threads the bilayer. Topologically, residues 962-1027 (MASKWLNLRA…ANIVGVCVMC (66 aa)) are extracellular. The chain crosses the membrane as a helical span at residues 1028–1048 (IVYLPWFAIAIPFLLVIFVLI). The Cytoplasmic portion of the chain corresponds to 1049–1117 (ADHYQSSGRE…GYLVVVLQRW (69 aa)). A helical transmembrane segment spans residues 1118–1138 (VGIFLDMVAIAFALIITLLCV). Residues 1139–1141 (TRA) are Extracellular-facing. A helical membrane pass occupies residues 1142–1162 (FPISAASVGVLLTYVLQLPGL). The Cytoplasmic portion of the chain corresponds to 1163-1477 (LNTILRAMTQ…IVENDFENRS (315 aa)). In terms of domain architecture, ABC transporter 2 spans 1213–1464 (IIFENVDFAY…EDSIFRSMCS (252 aa)). Residue 1247 to 1254 (GRTGAGKS) coordinates ATP.

This sequence belongs to the ABC transporter superfamily. ABCC family. Conjugate transporter (TC 3.A.1.208) subfamily.

The protein resides in the cell membrane. The enzyme catalyses a 1,2-diacyl-sn-glycero-3-phosphoethanolamine(in) + ATP + H2O = a 1,2-diacyl-sn-glycero-3-phosphoethanolamine(out) + ADP + phosphate + H(+). The catalysed reaction is Cd(2+)(in) + ATP + H2O = Cd(2+)(out) + ADP + phosphate + H(+). It catalyses the reaction an S-substituted glutathione(in) + ATP + H2O = an S-substituted glutathione(out) + ADP + phosphate + H(+). In terms of biological role, functions as a pleiotropic drug pump at the plasma membrane to clear toxic substances from the cytosol. Organic anion transporter involved in the detoxification of a wide range of toxic environmental organic anions that contain carboxyl groups. Required for tolerance to reveromycin A, tautomycin and leptomycin B. Required for oligomycin resistance. Required for rhodamine B resistance. Mediates the ATP-dependent efflux of rhodamine B. Involved in cadmium detoxification. Displays an energy-dependent efflux of cadmium and glutathione, suggesting that YOR1 transports both compounds as a bis-glutathionato-cadmium Cd-(GS)(2) complex. Confers resistance to rhodamine 6G and to doxorubicin. The protein is Oligomycin resistance ATP-dependent permease YOR1 of Saccharomyces cerevisiae (strain ATCC 204508 / S288c) (Baker's yeast).